Consider the following 542-residue polypeptide: MLIKGNILNVFTDEIYPGEIKIEHGIIESIKEVNADFNDIIVPGFIDAHIHIESSMLTPSRFAEIALRHGTTSVIADPHEIANVMGMDGIDYMIDDAKKTPLKYYFTAPSCVPATKFEKSGATISPNIIDNLLSRPEFVALGEVMDYNAVISNEKSILEKIKIAKKYHKPIDGHAPLLSGKNLQKYVKHGVITDHESTTKKEVAEKKRMGMKIMIREGSESKMLEKLIYSNCDFIVSDDLKPEDLINGHLDKCLRKAVDYGMDPYEAIKLVTINPAEHYNLNAGSISPGKSADLVFIDNLRDFTVKRVVINGNTIFKKQKLLFRANPRPIDTTLHVSLTKPEDFDLKAQNPAHKSATVNLINVSDNTIITKQSSAKLSIQKKTIIPSVFEDILKISVVDRYGGNTISNGFVKGFGIKNGAIASSVSHDSHNIIVVGTNSEYMSRATNHLIENKGGLAAISNQAKLDVTLPIAGLMSDKPAKVVANNSAKLNELVSNMGCELSSPFTSLSFMALPVVPEVKMTTNGLFNVNTHQFIDIIKEEK.

It belongs to the metallo-dependent hydrolases superfamily. Adenine deaminase family. Mn(2+) serves as cofactor.

The enzyme catalyses adenine + H2O + H(+) = hypoxanthine + NH4(+). This is Adenine deaminase from Methanosphaera stadtmanae (strain ATCC 43021 / DSM 3091 / JCM 11832 / MCB-3).